The sequence spans 378 residues: Geraniol dehydrogenase (378 aa).

7 residues coordinate Zn(2+): cysteine 48, histidine 75, cysteine 105, cysteine 108, cysteine 111, cysteine 119, and cysteine 179.

Belongs to the zinc-containing alcohol dehydrogenase family. In terms of assembly, monomer. Requires Zn(2+) as cofactor.

It carries out the reaction (2E)-geraniol + NAD(+) = (2E)-geranial + NADH + H(+). It catalyses the reaction (2E,6E)-farnesol + NAD(+) = (2E,6E)-farnesal + NADH + H(+). Its function is as follows. Catalyzes the NAD(+)-dependent oxidation of geraniol to geranial, playing an important role in the biosynthesis of neral, an alarm pheromone. Cannot use NADP(+). Also acts as a farnesol dehydrogenase by catalyzing the oxidation of (2E,6E)-farnesol to (2E,6E)-farnesal, with lower activity compared to geraniol dehydrogenase activity. The protein is Geraniol dehydrogenase of Carpoglyphus lactis (Dried fruit mite).